The chain runs to 54 residues: Large ribosomal subunit protein bL33A (54 aa).

The protein belongs to the bacterial ribosomal protein bL33 family.

This is Large ribosomal subunit protein bL33A from Mycobacterium marinum (strain ATCC BAA-535 / M).